The following is a 417-amino-acid chain: MLEQMGIAAKAASWQLALLSSREKNQVLEKIADYLEAQTDDILRANAEDLAEARANGLSEAMLDRLALTPARLSGIANDVRQVCNLADPVGQVIDGGLLDSGLRIERRRVPLGVIGVIYEARPNVTVDVASLCLKTGNAAILRGGKETWRTNAATVKVIQQALQECGLPAAAVQAIESPDRALVGEMLKMDKYIDMLIPRGGAGLHKLCREQSTIPVITGGIGVCHIFVDETAEIAPALKIIVNAKTQRPSTCNTVETLLVHRNIADTFLPALSKQMAESGVTLHAAPSALPALQNGPAKVEPVKAEQYDDEYLSLDLNVKVVADMDEAIAHIREHGTQHSDAILTRTLRNANRFINEVDSSAVYVNASTRFTDGGQFGLGAEVAVSTQKLHARGPMGLEALTTYKWIGFGDDTIRA.

It belongs to the gamma-glutamyl phosphate reductase family.

Its subcellular location is the cytoplasm. It catalyses the reaction L-glutamate 5-semialdehyde + phosphate + NADP(+) = L-glutamyl 5-phosphate + NADPH + H(+). Its pathway is amino-acid biosynthesis; L-proline biosynthesis; L-glutamate 5-semialdehyde from L-glutamate: step 2/2. Functionally, catalyzes the NADPH-dependent reduction of L-glutamate 5-phosphate into L-glutamate 5-semialdehyde and phosphate. The product spontaneously undergoes cyclization to form 1-pyrroline-5-carboxylate. This Klebsiella pneumoniae (strain 342) protein is Gamma-glutamyl phosphate reductase.